Consider the following 324-residue polypeptide: 4-hydroxy-2-oxoglutarate aldolase, mitochondrial (324 aa).

The N-terminal 22 residues, 1-22 (MFAHRSFSLLCRRSAVTSWRSQ), are a transit peptide targeting the mitochondrion. 74–75 (SN) is a substrate binding site. Catalysis depends on Lys193, which acts as the Schiff-base intermediate with substrate. Positions 195 and 219 each coordinate substrate.

It belongs to the DapA family. As to quaternary structure, homotetramer.

The protein localises to the mitochondrion. It catalyses the reaction (4S)-4-hydroxy-2-oxoglutarate = glyoxylate + pyruvate. The enzyme catalyses (4R)-4-hydroxy-2-oxoglutarate = glyoxylate + pyruvate. With respect to regulation, inhibited by divalent cations. Catalyzes the final step in the metabolic pathway of hydroxyproline. The sequence is that of 4-hydroxy-2-oxoglutarate aldolase, mitochondrial from Danio rerio (Zebrafish).